The primary structure comprises 90 residues: Probable Fe(2+)-trafficking protein (90 aa).

It belongs to the Fe(2+)-trafficking protein family. In terms of assembly, monomer.

Could be a mediator in iron transactions between iron acquisition and iron-requiring processes, such as synthesis and/or repair of Fe-S clusters in biosynthetic enzymes. In Sodalis glossinidius (strain morsitans), this protein is Probable Fe(2+)-trafficking protein.